Here is a 210-residue protein sequence, read N- to C-terminus: Outer-membrane lipoprotein LolB (210 aa).

The first 29 residues, 1–29, serve as a signal peptide directing secretion; sequence MSLISNNEERSLRVRYCIAIALSALLISG. The N-palmitoyl cysteine moiety is linked to residue C30. C30 carries S-diacylglycerol cysteine lipidation.

This sequence belongs to the LolB family. As to quaternary structure, monomer.

It localises to the cell outer membrane. Its function is as follows. Plays a critical role in the incorporation of lipoproteins in the outer membrane after they are released by the LolA protein. The sequence is that of Outer-membrane lipoprotein LolB from Coxiella burnetii (strain RSA 493 / Nine Mile phase I).